Reading from the N-terminus, the 292-residue chain is Succinate dehydrogenase assembly factor 2, mitochondrial (292 aa).

Disordered stretches follow at residues 27 to 68 (RSFG…NTTS) and 266 to 292 (TGFH…VFDS). Residues 55-68 (TNRPPNQHVPNTTS) show a composition bias toward polar residues.

This sequence belongs to the SDHAF2 family. As to quaternary structure, interacts with the flavoprotein subunit within the SDH catalytic dimer.

It localises to the mitochondrion matrix. Plays an essential role in the assembly of succinate dehydrogenase (SDH), an enzyme complex (also referred to as respiratory complex II) that is a component of both the tricarboxylic acid (TCA) cycle and the mitochondrial electron transport chain, and which couples the oxidation of succinate to fumarate with the reduction of ubiquinone (coenzyme Q) to ubiquinol. Required for flavinylation (covalent attachment of FAD) of the flavoprotein subunit of the SDH catalytic dimer. The protein is Succinate dehydrogenase assembly factor 2, mitochondrial of Aspergillus flavus (strain ATCC 200026 / FGSC A1120 / IAM 13836 / NRRL 3357 / JCM 12722 / SRRC 167).